The following is a 215-amino-acid chain: MSKGFFVDTTRCTACRGCQVACKQWHGNPATPTENTGFHQNPPDFNFHTYKLVRMHEQEIDGRIDWLFFPDQCRHCIAPPCKATADMEDESAIIHDDATGCVLFTPKTKDLEDYESVISACPYDVPRKVAESNQMAKCDMCIDRITNGLRPACVTSCPTGAMNFGDLSEMEAMASARLAEIKAAYSDAKLCDPDDVRVIFLTAHNPKLYHEYAVA.

Residues 3–32 (KGFFVDTTRCTACRGCQVACKQWHGNPATP) enclose the 4Fe-4S ferredoxin-type 1 domain. Residues C12, C15, C18, C22, C73, C76, C81, C121, C138, C141, C153, and C157 each contribute to the [4Fe-4S] cluster site. One can recognise a 4Fe-4S ferredoxin-type 2 domain in the interval 129-168 (VAESNQMAKCDMCIDRITNGLRPACVTSCPTGAMNFGDLS).

As to quaternary structure, heterodimer of alpha (FdhA) and beta (FdhB) subunits. [4Fe-4S] cluster serves as cofactor.

Its subcellular location is the periplasm. In terms of biological role, beta chain of the formate dehydrogenase (FDH) catalyzes the reversible two-electron oxidation of formate to carbon dioxide. FDH loses activity in the presence of air, but this activity can be restored. This chain is an electron transfer unit. The polypeptide is Formate dehydrogenase subunit beta (Megalodesulfovibrio gigas (strain ATCC 19364 / DSM 1382 / NCIMB 9332 / VKM B-1759) (Desulfovibrio gigas)).